Consider the following 314-residue polypeptide: tRNA dimethylallyltransferase 1 (314 aa).

8 to 15 is a binding site for ATP; sequence GPTGTGKS. 10 to 15 lines the substrate pocket; it reads TGTGKS.

The protein belongs to the IPP transferase family. In terms of assembly, monomer. The cofactor is Mg(2+).

The catalysed reaction is adenosine(37) in tRNA + dimethylallyl diphosphate = N(6)-dimethylallyladenosine(37) in tRNA + diphosphate. Catalyzes the transfer of a dimethylallyl group onto the adenine at position 37 in tRNAs that read codons beginning with uridine, leading to the formation of N6-(dimethylallyl)adenosine (i(6)A). The sequence is that of tRNA dimethylallyltransferase 1 from Mycobacterium marinum (strain ATCC BAA-535 / M).